A 312-amino-acid chain; its full sequence is Porphobilinogen deaminase (312 aa).

The residue at position 241 (Cys241) is an S-(dipyrrolylmethanemethyl)cysteine.

Belongs to the HMBS family. Monomer. Requires dipyrromethane as cofactor.

The enzyme catalyses 4 porphobilinogen + H2O = hydroxymethylbilane + 4 NH4(+). It participates in porphyrin-containing compound metabolism; protoporphyrin-IX biosynthesis; coproporphyrinogen-III from 5-aminolevulinate: step 2/4. Its pathway is porphyrin-containing compound metabolism; chlorophyll biosynthesis. Functionally, tetrapolymerization of the monopyrrole PBG into the hydroxymethylbilane pre-uroporphyrinogen in several discrete steps. In Prosthecochloris aestuarii (strain DSM 271 / SK 413), this protein is Porphobilinogen deaminase.